The primary structure comprises 422 residues: UDP-N-acetylglucosamine 1-carboxyvinyltransferase (422 aa).

22 to 23 (KN) contacts phosphoenolpyruvate. Arg92 provides a ligand contact to UDP-N-acetyl-alpha-D-glucosamine. Residue Cys116 is the Proton donor of the active site. At Cys116 the chain carries 2-(S-cysteinyl)pyruvic acid O-phosphothioketal. The UDP-N-acetyl-alpha-D-glucosamine site is built by Asp306 and Ile328.

This sequence belongs to the EPSP synthase family. MurA subfamily.

Its subcellular location is the cytoplasm. It carries out the reaction phosphoenolpyruvate + UDP-N-acetyl-alpha-D-glucosamine = UDP-N-acetyl-3-O-(1-carboxyvinyl)-alpha-D-glucosamine + phosphate. It participates in cell wall biogenesis; peptidoglycan biosynthesis. Functionally, cell wall formation. Adds enolpyruvyl to UDP-N-acetylglucosamine. This Elusimicrobium minutum (strain Pei191) protein is UDP-N-acetylglucosamine 1-carboxyvinyltransferase.